Here is a 421-residue protein sequence, read N- to C-terminus: E3 ubiquitin protein ligase DRIP1 (421 aa).

An RING-type zinc finger spans residues 16–57; it reads CSICDNILRDATTISECLHTFCRKCIYEKITEDEIETCPVCN. Composition is skewed to polar residues over residues 106-121 and 157-172; these read ISSL…AQAG and ESTS…TQNK. Disordered stretches follow at residues 106–198 and 216–307; these read ISSL…WDSK and PLKS…QERR. The span at 178–198 shows a compositional bias: basic and acidic residues; the sequence is SCKESISNKENKDGDEPWDSK. The segment covering 218-227 has biased composition (low complexity); that stretch reads KSSASQGSGS. Positions 244 to 253 are enriched in basic residues; it reads TKTKNKKRKC. Residues 262–271 are compositionally biased toward polar residues; that stretch reads NGDPTTSETV. Basic residues predominate over residues 274 to 284; that stretch reads KRMRTTQRKRS. Residues 285–294 are compositionally biased toward polar residues; the sequence is ATTLGDSRNL.

Interacts with DREB2A. Autoubiquitinated. As to expression, expressed in roots, leaves and flowers.

It is found in the nucleus. It carries out the reaction S-ubiquitinyl-[E2 ubiquitin-conjugating enzyme]-L-cysteine + [acceptor protein]-L-lysine = [E2 ubiquitin-conjugating enzyme]-L-cysteine + N(6)-ubiquitinyl-[acceptor protein]-L-lysine.. Its pathway is protein modification; protein ubiquitination. E3 ubiquitin-protein ligase that acts as a negative regulator of the response to water stress. Mediates ubiquitination and subsequent proteasomal degradation of the drought-induced transcriptional activator DREB2A. Functionally redundant with DRIP2. The polypeptide is E3 ubiquitin protein ligase DRIP1 (DRIP1) (Arabidopsis thaliana (Mouse-ear cress)).